A 443-amino-acid polypeptide reads, in one-letter code: 5-methylthioadenosine/S-adenosylhomocysteine deaminase 1 (443 aa).

Residues H69 and H71 each coordinate Zn(2+). The substrate site is built by E98 and H191. Residue H218 participates in Zn(2+) binding. Residues E221 and D306 each contribute to the substrate site. D306 contributes to the Zn(2+) binding site.

The protein belongs to the metallo-dependent hydrolases superfamily. MTA/SAH deaminase family. Zn(2+) is required as a cofactor.

It catalyses the reaction S-adenosyl-L-homocysteine + H2O + H(+) = S-inosyl-L-homocysteine + NH4(+). The catalysed reaction is S-methyl-5'-thioadenosine + H2O + H(+) = S-methyl-5'-thioinosine + NH4(+). In terms of biological role, catalyzes the deamination of 5-methylthioadenosine and S-adenosyl-L-homocysteine into 5-methylthioinosine and S-inosyl-L-homocysteine, respectively. Is also able to deaminate adenosine. The chain is 5-methylthioadenosine/S-adenosylhomocysteine deaminase 1 from Syntrophus aciditrophicus (strain SB).